The primary structure comprises 147 residues: MLMPKKVKHRKVQRGRMKGKATRGNSIAYGDYAIQATECAWITNNQIESARIAINRYIRRGGKLWIKIFPDKPVTEKPAETRMGSGKGSPEYWVAVVKPGRILFELSGVPEETAREAMRLASHKLPIKTKFVTKRDFEEVGGESDEG.

A disordered region spans residues 1–20; the sequence is MLMPKKVKHRKVQRGRMKGK.

This sequence belongs to the universal ribosomal protein uL16 family. In terms of assembly, part of the 50S ribosomal subunit.

Functionally, binds 23S rRNA and is also seen to make contacts with the A and possibly P site tRNAs. The chain is Large ribosomal subunit protein uL16 from Clostridium kluyveri (strain ATCC 8527 / DSM 555 / NBRC 12016 / NCIMB 10680 / K1).